A 200-amino-acid chain; its full sequence is ATP-dependent Clp protease proteolytic subunit (200 aa).

Catalysis depends on serine 97, which acts as the Nucleophile. Residue histidine 122 is part of the active site.

It belongs to the peptidase S14 family. In terms of assembly, fourteen ClpP subunits assemble into 2 heptameric rings which stack back to back to give a disk-like structure with a central cavity, resembling the structure of eukaryotic proteasomes.

It is found in the cytoplasm. It carries out the reaction Hydrolysis of proteins to small peptides in the presence of ATP and magnesium. alpha-casein is the usual test substrate. In the absence of ATP, only oligopeptides shorter than five residues are hydrolyzed (such as succinyl-Leu-Tyr-|-NHMec, and Leu-Tyr-Leu-|-Tyr-Trp, in which cleavage of the -Tyr-|-Leu- and -Tyr-|-Trp bonds also occurs).. Its function is as follows. Cleaves peptides in various proteins in a process that requires ATP hydrolysis. Has a chymotrypsin-like activity. Plays a major role in the degradation of misfolded proteins. In Oleidesulfovibrio alaskensis (strain ATCC BAA-1058 / DSM 17464 / G20) (Desulfovibrio alaskensis), this protein is ATP-dependent Clp protease proteolytic subunit.